The primary structure comprises 183 residues: Cell division protein ZapC (183 aa).

This sequence belongs to the ZapC family. In terms of assembly, interacts directly with FtsZ.

Its subcellular location is the cytoplasm. Its function is as follows. Contributes to the efficiency of the cell division process by stabilizing the polymeric form of the cell division protein FtsZ. Acts by promoting interactions between FtsZ protofilaments and suppressing the GTPase activity of FtsZ. This Proteus mirabilis (strain HI4320) protein is Cell division protein ZapC.